The following is a 251-amino-acid chain: MSGHSKWATTKHKKAAIDAKRGKLFAKLIKNIEIAARQGGGDPDGNPALYDAIYKAKKASMPADNIKRAVARGSGAEAGGANYEEIIYEGYAPAGVGLIIECLTDNRNRAAADVRSTLGKGGGSLATNGAVSFNFERKGEIVVPSEGLDFDDLFEKAAEAGAEDVIDDGDTYTVVTAPSDLITVRQALQDAGVDYDSADLVMRPKNEIELGLDDARKVSKLIDNLDDLDDVQNIYSNWTASDDVLAQLDEE.

Belongs to the TACO1 family.

Its subcellular location is the cytoplasm. This is Probable transcriptional regulatory protein BLA_1344 from Bifidobacterium animalis subsp. lactis (strain AD011).